The chain runs to 628 residues: MAIKPQPQWQRRLASVLLWGSTIYLLVNLLAPALFRSQPPQVPYSLFIDQVEGDKVASVYVGQNEIRYQLKPEAEDEGKEKAAEGQILRTTPIFDLELPKRLEAKGIEFAAAPPAKNSWFGTLLSWVIPPLIFVGIWSFFLNRNNNGAPGGALAFTKSKAKVYVEGDSTKVTFDDVAGVEEAKTELSEVVDFLKFPQRYTALGAKIPKGVLLVGPPGTGKTLLAKAAAGEAGVPFFIISGSEFVELFVGAGAARVRDLFEQAKKQAPCIVFIDELDAIGKSRASGAFMGGNDEREQTLNQLLTEMDGFSAAGATVIVLAATNRPETLDPALLRPGRFDRQVLVDRPDLAGRLKILEIYAKKIKLDKEVELKNIATRTPGFAGADLANLVNEAALLAARNKQDSVTEADFREAIERVVAGLEKKSRVLSDKEKKIVAYHEVGHALVGAVMPGGGQVAKISIVPRGMAALGYTLQMPTEDRFLLNESELRDQIATLLGGRAAEEIVFDSITTGAANDLQRATDLAEQMVTTYGMSKVLGPLAYDKGQQNNFLGQGMGNPRRMVSDDTAKEIDLEVKEIVEQGHNQALAILEHNRDLLEAIAEKILEKEVIEGEELHHLLGQVQAPGTLVV.

The Cytoplasmic portion of the chain corresponds to 1–14 (MAIKPQPQWQRRLA). The chain crosses the membrane as a helical span at residues 15 to 35 (SVLLWGSTIYLLVNLLAPALF). Topologically, residues 36-119 (RSQPPQVPYS…AAAPPAKNSW (84 aa)) are lumenal. A helical transmembrane segment spans residues 120–140 (FGTLLSWVIPPLIFVGIWSFF). The Cytoplasmic portion of the chain corresponds to 141–628 (LNRNNNGAPG…QVQAPGTLVV (488 aa)). 214-221 (GPPGTGKT) is an ATP binding site. Zn(2+) is bound at residue H438. E439 is an active-site residue. Zn(2+) contacts are provided by H442 and D515.

The protein in the central section; belongs to the AAA ATPase family. It in the C-terminal section; belongs to the peptidase M41 family. In terms of assembly, homohexamer. The cofactor is Zn(2+).

The protein resides in the cellular thylakoid membrane. Acts as a processive, ATP-dependent zinc metallopeptidase for both cytoplasmic and membrane proteins. Plays a role in the quality control of integral membrane proteins. This chain is ATP-dependent zinc metalloprotease FtsH 4, found in Synechocystis sp. (strain ATCC 27184 / PCC 6803 / Kazusa).